We begin with the raw amino-acid sequence, 188 residues long: Elongation factor P (188 aa).

Belongs to the elongation factor P family.

Its subcellular location is the cytoplasm. It functions in the pathway protein biosynthesis; polypeptide chain elongation. Involved in peptide bond synthesis. Stimulates efficient translation and peptide-bond synthesis on native or reconstituted 70S ribosomes in vitro. Probably functions indirectly by altering the affinity of the ribosome for aminoacyl-tRNA, thus increasing their reactivity as acceptors for peptidyl transferase. This is Elongation factor P from Parabacteroides distasonis (strain ATCC 8503 / DSM 20701 / CIP 104284 / JCM 5825 / NCTC 11152).